The primary structure comprises 760 residues: Transferrin receptor protein 1 (760 aa).

Topologically, residues 1–65 are cytoplasmic; it reads MMDQARSAFS…VTKPKRCGGS (65 aa). Residues 1-67 are mediates interaction with SH3BP4; sequence MMDQARSAFS…KPKRCGGSIC (67 aa). Phosphoserine occurs at positions 10 and 19. Position 20 is a phosphotyrosine (Y20). An Endocytosis signal motif is present at residues 20–23; sequence YTRF. Residue T21 is modified to Phosphothreonine. S24 carries the phosphoserine modification. The short motif at 58-61 is the Stop-transfer sequence element; that stretch reads KPKR. 2 S-palmitoyl cysteine lipidation sites follow: C62 and C67. A helical; Signal-anchor for type II membrane protein transmembrane segment spans residues 66-86; it reads ICYGTIAVIIFFLIGFMIGYL. Residues 87 to 760 lie on the Extracellular side of the membrane; the sequence is GYCKGVEPKT…GDVWDIDNEF (674 aa). In terms of domain architecture, PA spans 223–313; that stretch reads SKAATVTGKL…GTGDPYTPGF (91 aa). 2 N-linked (GlcNAc...) asparagine glycosylation sites follow: N251 and N317. Residues 569 to 760 form a ligand-binding region; the sequence is TMDTYKELTE…GDVWDIDNEF (192 aa). The short motif at 646–648 is the Cell attachment site element; sequence RGD. Residues N722 and N727 are each glycosylated (N-linked (GlcNAc...) asparagine).

The protein belongs to the peptidase M28 family. M28B subfamily. As to quaternary structure, homodimer; disulfide-linked. Binds one transferrin or HFE molecule per subunit. Interacts with SH3BP4. Interacts with STEAP3; facilitates TFRC endocytosis in erythroid precursor cells. Stearoylated by ZDHHC6 which inhibits TFRC-mediated activation of the JNK pathway and promotes mitochondrial fragmentation. Stearoylation does not affect iron uptake.

The protein resides in the cell membrane. It localises to the melanosome. In terms of biological role, cellular uptake of iron occurs via receptor-mediated endocytosis of ligand-occupied transferrin receptor into specialized endosomes. Endosomal acidification leads to iron release. The apotransferrin-receptor complex is then recycled to the cell surface with a return to neutral pH and the concomitant loss of affinity of apotransferrin for its receptor. Transferrin receptor is necessary for development of erythrocytes and the nervous system. Positively regulates T and B cell proliferation through iron uptake. Acts as a lipid sensor that regulates mitochondrial fusion by regulating activation of the JNK pathway. When dietary levels of stearate (C18:0) are low, promotes activation of the JNK pathway, resulting in HUWE1-mediated ubiquitination and subsequent degradation of the mitofusin MFN2 and inhibition of mitochondrial fusion. When dietary levels of stearate (C18:0) are high, TFRC stearoylation inhibits activation of the JNK pathway and thus degradation of the mitofusin MFN2. Mediates uptake of NICOL1 into fibroblasts where it may regulate extracellular matrix production. In Pongo abelii (Sumatran orangutan), this protein is Transferrin receptor protein 1 (TFRC).